Here is an 827-residue protein sequence, read N- to C-terminus: Periplasmic nitrate reductase (827 aa).

Positions 1 to 32 form a signal peptide, tat-type signal; that stretch reads MELNRRDFMKANAAMAAAAAAGMTIPVKNVYA. The 4Fe-4S Mo/W bis-MGD-type domain maps to 37 to 93; it reads IRWDKAPCRFCGTGCSVLVGTKDGRVVATQGDPDAEVNRGLNCIKGYFLSKIMYGAD. Residues C44, C47, C51, and C79 each contribute to the [4Fe-4S] cluster site. Mo-bis(molybdopterin guanine dinucleotide) is bound by residues K81, Q148, N173, C177, 210-217, 241-245, M371, Q375, N481, 507-508, K530, D557, and 717-726; these read WGSNMAEM, STFEH, SD, and TGRVLEHWHT. F793 serves as a coordination point for substrate. Positions 801 and 818 each coordinate Mo-bis(molybdopterin guanine dinucleotide).

This sequence belongs to the prokaryotic molybdopterin-containing oxidoreductase family. NasA/NapA/NarB subfamily. Component of the periplasmic nitrate reductase NapAB complex composed of NapA and NapB. It depends on [4Fe-4S] cluster as a cofactor. The cofactor is Mo-bis(molybdopterin guanine dinucleotide). Post-translationally, predicted to be exported by the Tat system. The position of the signal peptide cleavage has not been experimentally proven.

Its subcellular location is the periplasm. The enzyme catalyses 2 Fe(II)-[cytochrome] + nitrate + 2 H(+) = 2 Fe(III)-[cytochrome] + nitrite + H2O. Its function is as follows. Catalytic subunit of the periplasmic nitrate reductase complex NapAB. Receives electrons from NapB and catalyzes the reduction of nitrate to nitrite. This Actinobacillus pleuropneumoniae serotype 7 (strain AP76) protein is Periplasmic nitrate reductase.